The following is a 523-amino-acid chain: UDP-glucuronosyltransferase 3A1 (523 aa).

Residues 1–22 form the signal peptide; it reads MAAHRSWLLVSFFLLEVLLLEA. Topologically, residues 23–487 are extracellular; that stretch reads AKILTISTLS…QPWHEQYMLD (465 aa). Asn-70 carries N-linked (GlcNAc...) asparagine glycosylation. Residues 488-508 traverse the membrane as a helical segment; sequence VFLFLLGLTLGTLWLSVKVLV. Residues 509-523 lie on the Cytoplasmic side of the membrane; the sequence is AVTRYLSISRKVKQA.

It belongs to the UDP-glycosyltransferase family. In terms of tissue distribution, highly expressed in kidney, while it is expressed at low levels in liver. Not detected in other tissues examined.

It localises to the membrane. The enzyme catalyses glucuronate acceptor + UDP-alpha-D-glucuronate = acceptor beta-D-glucuronoside + UDP + H(+). Functionally, UDP-glucuronosyltransferases catalyze phase II biotransformation reactions in which lipophilic substrates are conjugated with glucuronic acid to increase water solubility and enhance excretion. They are of major importance in the conjugation and subsequent elimination of potentially toxic xenobiotics and endogenous compounds. The protein is UDP-glucuronosyltransferase 3A1 (Ugt3a1) of Mus musculus (Mouse).